Here is a 254-residue protein sequence, read N- to C-terminus: 5-oxoprolinase subunit A (254 aa).

This sequence belongs to the LamB/PxpA family. As to quaternary structure, forms a complex composed of PxpA, PxpB and PxpC.

The catalysed reaction is 5-oxo-L-proline + ATP + 2 H2O = L-glutamate + ADP + phosphate + H(+). In terms of biological role, catalyzes the cleavage of 5-oxoproline to form L-glutamate coupled to the hydrolysis of ATP to ADP and inorganic phosphate. This Carboxydothermus hydrogenoformans (strain ATCC BAA-161 / DSM 6008 / Z-2901) protein is 5-oxoprolinase subunit A.